The sequence spans 434 residues: MLDFMDYIQLAFAEATNWNRDNSYSSLTATAQSLLDFSTPERLRVHLSSLSTPHFATSYTLGTVGLIDGSVSYLFSTVPLDKFPSRSALIPLRKLSPGYRQVQAPIAPIAETILINDDLNDASAYTTIGKKATLFHATLHLPPPTTLNALFLRRISPTMQLSLAVCSTRGPPLSKSAPQASLLAQLSHNTGKYNNEYLFSTDNALFGWRGLWNFGPDPRDPVASGSSPRLSLLSAGAEAYYSPVSSLIGMSTGLRFSTANANTPISTFPYTLTLTLTPLTGSLSTTYSLRASPNLAFSSRFGFNVYSWESEMVAGCELWRKSKSRYRDDGDGVEWARRKIRESLFPHPHPHLSTSTPNDIKDLAGHALEKSGKGEEEENESVLKIRVDQSWNVRLLWEGRVKELLVLIDRVVEVYSNERCLRELRLMVVFNLDL.

The protein belongs to the MDM10 family. In terms of assembly, component of the ER-mitochondria encounter structure (ERMES) or MDM complex, composed of mmm1, mdm10, mdm12 and mdm34. Associates with the mitochondrial outer membrane sorting assembly machinery SAM(core) complex.

It is found in the mitochondrion outer membrane. Functionally, component of the ERMES/MDM complex, which serves as a molecular tether to connect the endoplasmic reticulum and mitochondria. Components of this complex are involved in the control of mitochondrial shape and protein biogenesis and may function in phospholipid exchange. mdm10 is involved in the late assembly steps of the general translocase of the mitochondrial outer membrane (TOM complex). Functions in the tom40-specific route of the assembly of outer membrane beta-barrel proteins, including the association of tom40 with the receptor tom22 and small TOM proteins. Can associate with the SAM(core) complex as well as the mdm12-mmm1 complex, both involved in late steps of the major beta-barrel assembly pathway, that is responsible for biogenesis of all outer membrane beta-barrel proteins. May act as a switch that shuttles between both complexes and channels precursor proteins into the tom40-specific pathway. Plays a role in mitochondrial morphology and in the inheritance of mitochondria. In Aspergillus niger (strain ATCC MYA-4892 / CBS 513.88 / FGSC A1513), this protein is Mitochondrial distribution and morphology protein 10 (mdmB).